Consider the following 336-residue polypeptide: Palmitoyltransferase SWF1 (336 aa).

Over 1 to 2 the chain is Lumenal; it reads MS. The chain crosses the membrane as a helical span at residues 3-23; sequence WNLLFVLLIGFVVLILLSPVF. The Cytoplasmic portion of the chain corresponds to 24-50; sequence KSTWPFSTFYRNVFQPFLVDDQKYRWK. A helical transmembrane segment spans residues 51–71; it reads LHLVPLFYTSIYLYLVYTYHM. Topologically, residues 72 to 86 are lumenal; it reads RVESTIKNELFLLER. Residues 87–107 traverse the membrane as a helical segment; that stretch reads ILIVPIIILPPVALGILAMVS. Topologically, residues 108–179 are cytoplasmic; sequence RAEDSKDHKS…CIGKGNYLQF (72 aa). One can recognise a DHHC domain in the interval 134 to 184; the sequence is IKCSTCRIVKPARSKHCSICNRCVLVADHHCIWINNCIGKGNYLQFYLFLI. A helical membrane pass occupies residues 180–200; the sequence is YLFLISNIFSMCYAFLRLWYI. Residues 201–216 are Lumenal-facing; the sequence is SLNSTSTLPRAVLTLT. Residues 217–237 form a helical membrane-spanning segment; sequence ILCGCFTIICAIFTYLQLAIV. The Cytoplasmic portion of the chain corresponds to 238–336; it reads KEGMTTNEQD…TFLANLTDLI (99 aa).

This sequence belongs to the DHHC palmitoyltransferase family. SWF1 subfamily.

It is found in the endoplasmic reticulum membrane. The enzyme catalyses L-cysteinyl-[protein] + hexadecanoyl-CoA = S-hexadecanoyl-L-cysteinyl-[protein] + CoA. Its function is as follows. Palmitoyltransferase that targets several endosomal SNAREs. Palmitoylates the SNAREs SNC1, SNC2, SYN8 and TLG1, at cysteine residues close to the cytoplasmic end of their transmembrane domain. May have a role in the cellular quality control of transmembrane domain-containing proteins. The protein is Palmitoyltransferase SWF1 (SWF1) of Saccharomyces cerevisiae (strain ATCC 204508 / S288c) (Baker's yeast).